A 385-amino-acid chain; its full sequence is Anhydro-N-acetylmuramic acid kinase (385 aa).

12–19 (GTSLDGID) contacts ATP.

This sequence belongs to the anhydro-N-acetylmuramic acid kinase family.

It carries out the reaction 1,6-anhydro-N-acetyl-beta-muramate + ATP + H2O = N-acetyl-D-muramate 6-phosphate + ADP + H(+). It functions in the pathway amino-sugar metabolism; 1,6-anhydro-N-acetylmuramate degradation. Its pathway is cell wall biogenesis; peptidoglycan recycling. Its function is as follows. Catalyzes the specific phosphorylation of 1,6-anhydro-N-acetylmuramic acid (anhMurNAc) with the simultaneous cleavage of the 1,6-anhydro ring, generating MurNAc-6-P. Is required for the utilization of anhMurNAc either imported from the medium or derived from its own cell wall murein, and thus plays a role in cell wall recycling. The sequence is that of Anhydro-N-acetylmuramic acid kinase from Bacillus thuringiensis (strain Al Hakam).